Here is a 323-residue protein sequence, read N- to C-terminus: Breast cancer metastasis-suppressor 1-like protein (323 aa).

Over residues 1–17 (MPVHSRGDKKETNHHDE) the composition is skewed to basic and acidic residues. Residues 1 to 56 (MPVHSRGDKKETNHHDEMEVDYAENEGSSSEDEDTESSSVSEDGDSSEMDDEDCER) are disordered. Residues 18–53 (MEVDYAENEGSSSEDEDTESSSVSEDGDSSEMDDED) are compositionally biased toward acidic residues. Coiled-coil stretches lie at residues 52 to 84 (EDCE…KERL) and 149 to 180 (EKLL…ITSE). At serine 197 the chain carries Phosphoserine. Glycyl lysine isopeptide (Lys-Gly) (interchain with G-Cter in SUMO2) cross-links involve residues lysine 240 and lysine 246.

This sequence belongs to the BRMS1 family. In terms of assembly, component of the Sin3/HDAC1 corepressor complex at least composed of BRMS1, BRMS1L and ING2/ING1L. Interacts with HDAC and SIN3A.

The protein localises to the nucleus. In terms of biological role, involved in the histone deacetylase (HDAC1)-dependent transcriptional repression activity. When overexpressed in lung cancer cell line that lacks p53/TP53 expression, inhibits cell growth. The chain is Breast cancer metastasis-suppressor 1-like protein (BRMS1L) from Bos taurus (Bovine).